A 181-amino-acid polypeptide reads, in one-letter code: Protein csk22 (181 aa).

5 helical membrane-spanning segments follow: residues 5-22, 35-57, 61-78, 91-113, and 140-162; these read LQSV…YKKI, WLFT…SAIH, YGYL…VFFA, IYFR…RFLY, and LTIG…IIKL.

The protein resides in the cell membrane. The polypeptide is Protein csk22 (csk22) (Bacillus subtilis (strain 168)).